The chain runs to 82 residues: MKIHLIRHNTTLEFNNETSLLDHLEKNNIHHEYQCRSGYCGSCRVKIKKGKVSYKEMPLAFIQPDEILLCCCHVESDIEIDL.

One can recognise a 2Fe-2S ferredoxin-type domain in the interval 1–82 (MKIHLIRHNT…HVESDIEIDL (82 aa)). Cys35, Cys40, Cys43, and Cys72 together coordinate [2Fe-2S] cluster.

[2Fe-2S] cluster is required as a cofactor.

This is an uncharacterized protein from Haemophilus influenzae (strain ATCC 51907 / DSM 11121 / KW20 / Rd).